The following is a 204-amino-acid chain: Probable nicotinate-nucleotide adenylyltransferase (204 aa).

It belongs to the NadD family.

It carries out the reaction nicotinate beta-D-ribonucleotide + ATP + H(+) = deamido-NAD(+) + diphosphate. It participates in cofactor biosynthesis; NAD(+) biosynthesis; deamido-NAD(+) from nicotinate D-ribonucleotide: step 1/1. Its function is as follows. Catalyzes the reversible adenylation of nicotinate mononucleotide (NaMN) to nicotinic acid adenine dinucleotide (NaAD). The protein is Probable nicotinate-nucleotide adenylyltransferase of Dehalococcoides mccartyi (strain ATCC BAA-2100 / JCM 16839 / KCTC 5957 / BAV1).